A 157-amino-acid chain; its full sequence is Small ribosomal subunit protein uS9 (157 aa).

This sequence belongs to the universal ribosomal protein uS9 family.

This chain is Small ribosomal subunit protein uS9, found in Caulobacter vibrioides (strain ATCC 19089 / CIP 103742 / CB 15) (Caulobacter crescentus).